Here is a 323-residue protein sequence, read N- to C-terminus: Queuosine 5'-phosphate N-glycosylase/hydrolase (323 aa).

Queuosine 5'-phosphate-binding residues include Asn72, Tyr93, Lys199, Phe229, Asp231, Asp298, Trp302, and Gln306. Asp231 functions as the Nucleophile or transition state stabilizer in the catalytic mechanism.

Belongs to the QNG1 protein family. Monomer.

It carries out the reaction queuosine 5'-phosphate + H2O = queuine + D-ribose 5-phosphate. Functionally, catalyzes the hydrolysis of queuosine 5'-phosphate, releasing the nucleobase queuine (q). Is likely required for salvage of queuine from exogenous queuosine (Q) that is imported and then converted to queuosine 5'-phosphate intracellularly. In vitro, can also catalyze the release of the q base directly from Q as substrate; however, Q may not be the biologically relevant substrate. Shows a very low activity on queuosine 3',5'-diphosphate, and cannot release q from queuosine 3'-phosphate and from the 5'-nucleotides AMP, UMP, CMP or GMP, indicating specificity for the queuine base. The chain is Queuosine 5'-phosphate N-glycosylase/hydrolase from Sphaerobacter thermophilus (strain ATCC 49802 / DSM 20745 / KCCM 41009 / NCIMB 13125 / S 6022).